We begin with the raw amino-acid sequence, 220 residues long: NADH-quinone oxidoreductase subunit I (220 aa).

4Fe-4S ferredoxin-type domains are found at residues 71 to 102 (LQRL…IITH) and 112 to 141 (DSYT…MGNR). [4Fe-4S] cluster is bound by residues Cys-82, Cys-85, Cys-88, Cys-92, Cys-121, Cys-124, Cys-127, and Cys-131. The interval 187–220 (MQATPLDYVQEPSKEESKEETPTNPESNKGDENV) is disordered. Positions 198–207 (PSKEESKEET) are enriched in basic and acidic residues.

Belongs to the complex I 23 kDa subunit family. In terms of assembly, NDH-1 is composed of 14 different subunits. Subunits NuoA, H, J, K, L, M, N constitute the membrane sector of the complex. Requires [4Fe-4S] cluster as cofactor.

It is found in the cell inner membrane. It catalyses the reaction a quinone + NADH + 5 H(+)(in) = a quinol + NAD(+) + 4 H(+)(out). In terms of biological role, NDH-1 shuttles electrons from NADH, via FMN and iron-sulfur (Fe-S) centers, to quinones in the respiratory chain. The immediate electron acceptor for the enzyme in this species is believed to be ubiquinone. Couples the redox reaction to proton translocation (for every two electrons transferred, four hydrogen ions are translocated across the cytoplasmic membrane), and thus conserves the redox energy in a proton gradient. The protein is NADH-quinone oxidoreductase subunit I of Helicobacter pylori (strain Shi470).